Here is a 56-residue protein sequence, read N- to C-terminus: Small ribosomal subunit protein uS14 (56 aa).

Zn(2+) contacts are provided by cysteine 21, cysteine 24, cysteine 39, and cysteine 42.

Belongs to the universal ribosomal protein uS14 family. Zinc-binding uS14 subfamily. In terms of assembly, part of the 30S ribosomal subunit. Zn(2+) is required as a cofactor.

Functionally, binds 16S rRNA, required for the assembly of 30S particles. The sequence is that of Small ribosomal subunit protein uS14 from Methanospirillum hungatei JF-1 (strain ATCC 27890 / DSM 864 / NBRC 100397 / JF-1).